The chain runs to 327 residues: Ran-specific GTPase-activating protein 2 (327 aa).

2 disordered regions span residues 1-96 (MSET…KKED) and 109-205 (GFGV…KQEV). Basic and acidic residues predominate over residues 24–83 (PIDKLDGTPKRPREKDQDEQAEETSDKSEAPNKNDEEKKEEGKKDQEPSHKKIKVDDGKT). T31 bears the Phosphothreonine mark. Residues 122–133 (ATTSTESLPASD) show a composition bias toward polar residues. Residues 140–152 (FAFGSGLSFGSGF) show a composition bias toward low complexity. 2 stretches are compositionally biased toward basic and acidic residues: residues 157–179 (NKTE…KVHS) and 189–205 (EDTK…KQEV). S179 is subject to Phosphoserine. The region spanning 191-327 (TKDKPKPLKL…YNIIVKSVPK (137 aa)) is the RanBD1 domain.

Interacts with GSP1, XPO1 and SRM1.

The protein localises to the nucleus. Important for the export of protein containing nuclear export signal (NES) out of the nucleus. Stimulates the GTPase activity of GSP1. The protein is Ran-specific GTPase-activating protein 2 (YRB2) of Saccharomyces cerevisiae (strain ATCC 204508 / S288c) (Baker's yeast).